A 244-amino-acid polypeptide reads, in one-letter code: Glutathione S-transferase theta-2B (244 aa).

One can recognise a GST N-terminal domain in the interval 2–82 (GLELFLDLVS…YLSCKYQTPD (81 aa)). Residues 40-41 (HK), 53-54 (KL), 66-67 (ES), and 104-107 (DCIR) each bind glutathione. One can recognise a GST C-terminal domain in the interval 88–224 (DLQARARVHE…SILEQAAKKT (137 aa)).

It belongs to the GST superfamily. Theta family. As to quaternary structure, homodimer. As to expression, expressed at low levels in liver. In lung, expressed at low levels in ciliated bronchiolar cells, alveolar macrophages and alveolar type II cells.

The protein localises to the cytoplasm. It localises to the cytosol. It catalyses the reaction RX + glutathione = an S-substituted glutathione + a halide anion + H(+). Conjugation of reduced glutathione to a wide number of exogenous and endogenous hydrophobic electrophiles. Has a sulfatase activity. The polypeptide is Glutathione S-transferase theta-2B (GSTT2B) (Homo sapiens (Human)).